A 188-amino-acid chain; its full sequence is Peptidyl-tRNA hydrolase (188 aa).

Phe-15 is a tRNA binding site. The active-site Proton acceptor is the His-20. TRNA-binding residues include Tyr-64, Asn-66, and Asn-112.

It belongs to the PTH family. Monomer.

The protein resides in the cytoplasm. It catalyses the reaction an N-acyl-L-alpha-aminoacyl-tRNA + H2O = an N-acyl-L-amino acid + a tRNA + H(+). In terms of biological role, hydrolyzes ribosome-free peptidyl-tRNAs (with 1 or more amino acids incorporated), which drop off the ribosome during protein synthesis, or as a result of ribosome stalling. Catalyzes the release of premature peptidyl moieties from peptidyl-tRNA molecules trapped in stalled 50S ribosomal subunits, and thus maintains levels of free tRNAs and 50S ribosomes. This Borreliella burgdorferi (strain ATCC 35210 / DSM 4680 / CIP 102532 / B31) (Borrelia burgdorferi) protein is Peptidyl-tRNA hydrolase.